We begin with the raw amino-acid sequence, 212 residues long: MQILLAALVAYLIGSVSFAVVVSAAMGLADPRSYGSKNPGATNVLRSGNKKAAILTLVGDAFKGWLAVWLARHFGLPDVAVACVAIAVFLGHLYPVFFRFQGGKGVATAAGVLLAVHPVLGLATALTWLIVAFFFRYSSLAALVAAVFAPLFDVFLFGTSHNPVAWAVLAMSVLLVWRHRGNISKLLAGQESRIGDKKKAAADGGAQDGGKL.

The next 4 helical transmembrane spans lie at 3 to 23, 78 to 98, 115 to 135, and 155 to 177; these read ILLAALVAYLIGSVSFAVVVS, DVAVACVAIAVFLGHLYPVFF, AVHPVLGLATALTWLIVAFFF, and FLFGTSHNPVAWAVLAMSVLLVW.

It belongs to the PlsY family. In terms of assembly, probably interacts with PlsX.

The protein localises to the cell inner membrane. The enzyme catalyses an acyl phosphate + sn-glycerol 3-phosphate = a 1-acyl-sn-glycero-3-phosphate + phosphate. The protein operates within lipid metabolism; phospholipid metabolism. In terms of biological role, catalyzes the transfer of an acyl group from acyl-phosphate (acyl-PO(4)) to glycerol-3-phosphate (G3P) to form lysophosphatidic acid (LPA). This enzyme utilizes acyl-phosphate as fatty acyl donor, but not acyl-CoA or acyl-ACP. The polypeptide is Glycerol-3-phosphate acyltransferase (Burkholderia ambifaria (strain ATCC BAA-244 / DSM 16087 / CCUG 44356 / LMG 19182 / AMMD) (Burkholderia cepacia (strain AMMD))).